Consider the following 305-residue polypeptide: N-acetylmuramic acid 6-phosphate etherase (305 aa).

Residues 1-24 are disordered; the sequence is MTTPPSSPLSDPRRTEGVHPTHTD. Over residues 11 to 24 the composition is skewed to basic and acidic residues; the sequence is DPRRTEGVHPTHTD. Residues 62 to 225 form the SIS domain; that stretch reads ALPRLERGGR…SSALMVRLGK (164 aa). The Proton donor role is filled by glutamate 90. Glutamate 121 is a catalytic residue.

The protein belongs to the GCKR-like family. MurNAc-6-P etherase subfamily. In terms of assembly, homodimer.

It carries out the reaction N-acetyl-D-muramate 6-phosphate + H2O = N-acetyl-D-glucosamine 6-phosphate + (R)-lactate. Its pathway is amino-sugar metabolism; N-acetylmuramate degradation. In terms of biological role, specifically catalyzes the cleavage of the D-lactyl ether substituent of MurNAc 6-phosphate, producing GlcNAc 6-phosphate and D-lactate. The chain is N-acetylmuramic acid 6-phosphate etherase from Deinococcus geothermalis (strain DSM 11300 / CIP 105573 / AG-3a).